The sequence spans 336 residues: UDP-N-acetylenolpyruvoylglucosamine reductase (336 aa).

One can recognise an FAD-binding PCMH-type domain in the interval 17–188 (LRSLAERFVE…WDVTFRLPKK (172 aa)). Residue arginine 164 is part of the active site. The active-site Proton donor is serine 237. Glutamate 332 is a catalytic residue.

This sequence belongs to the MurB family. FAD is required as a cofactor.

The protein resides in the cytoplasm. The catalysed reaction is UDP-N-acetyl-alpha-D-muramate + NADP(+) = UDP-N-acetyl-3-O-(1-carboxyvinyl)-alpha-D-glucosamine + NADPH + H(+). It functions in the pathway cell wall biogenesis; peptidoglycan biosynthesis. Functionally, cell wall formation. In Bdellovibrio bacteriovorus (strain ATCC 15356 / DSM 50701 / NCIMB 9529 / HD100), this protein is UDP-N-acetylenolpyruvoylglucosamine reductase.